Reading from the N-terminus, the 175-residue chain is RNA pyrophosphohydrolase (175 aa).

One can recognise a Nudix hydrolase domain in the interval 6-149 (GYRPNVGIVI…KRDVYRRVMK (144 aa)). Positions 38–59 (GGINPGETAEQAMYRELFEEVG) match the Nudix box motif.

The protein belongs to the Nudix hydrolase family. RppH subfamily. The cofactor is a divalent metal cation.

In terms of biological role, accelerates the degradation of transcripts by removing pyrophosphate from the 5'-end of triphosphorylated RNA, leading to a more labile monophosphorylated state that can stimulate subsequent ribonuclease cleavage. This Serratia proteamaculans (strain 568) protein is RNA pyrophosphohydrolase.